The primary structure comprises 659 residues: Alpha-amylase (659 aa).

An N-terminal signal peptide occupies residues 1-27 (MFAKRFKTSLLPLFAGFLLLFHLVLAG). A propeptide spanning residues 28–41 (PAAASAETANKSNE) is cleaved from the precursor. N142, T178, D187, G210, and D212 together coordinate Ca(2+). D217 serves as the catalytic Nucleophile. Ca(2+) is bound at residue H221. Catalysis depends on E249, which acts as the Proton donor.

The protein belongs to the glycosyl hydrolase 13 family. As to quaternary structure, monomer. Ca(2+) serves as cofactor.

The protein resides in the secreted. It catalyses the reaction Endohydrolysis of (1-&gt;4)-alpha-D-glucosidic linkages in polysaccharides containing three or more (1-&gt;4)-alpha-linked D-glucose units.. The sequence is that of Alpha-amylase (amyE) from Bacillus subtilis (strain 168).